Reading from the N-terminus, the 1100-residue chain is Formin-like protein 1 (1100 aa).

Residues 1 to 13 (MGNAAGSAEQPAG) show a composition bias toward low complexity. 4 disordered regions span residues 1-31 (MGNA…PMPA), 167-200 (STDN…PKSR), 446-474 (RFSE…TRPS), and 510-635 (TPSG…AKKP). Residue Gly2 is the site of N-myristoyl glycine attachment. Ser7 carries the post-translational modification Phosphoserine. A compositionally biased stretch (pro residues) spans 14-28 (PAAPPPKQPAPPKQP). A GBD/FH3 domain is found at 27–468 (QPMPAAGELE…PPEPEKAPPA (442 aa)). Residue Ser184 is modified to Phosphoserine. The segment covering 517–538 (PTPGVPTGSPSPDLAPAAEPAP) has biased composition (low complexity). The span at 539–615 (GAAPPPPPPL…PPPPPPPGGP (77 aa)) shows a compositional bias: pro residues. A phosphoserine mark is found at Ser624 and Ser693. Positions 632–1023 (AKKPIQTKFR…QEAGADTPGK (392 aa)) constitute an FH2 domain. The tract at residues 1008–1037 (KKEAAAQEAGADTPGKGEPPAPKSPPKARR) is disordered. A compositionally biased stretch (low complexity) spans 1013 to 1023 (AQEAGADTPGK). Position 1031 is a phosphoserine (Ser1031). The 32-residue stretch at 1059–1090 (SDRDGAIEDIITVIKTVPFTARTGKRTSRLLC) folds into the DAD domain.

Belongs to the formin homology family. Interacts with RAC1, PFN1 and PFN2. Interacts (activated by RAC1) with SRGAP2 (via SH3 domain); regulates the actin filament severing activity of FMNL1. Post-translationally, myristoylation mediates membrane localization and blebbing. As to expression, expressed in heart, brain, placenta, lung, liver, skeletal muscle, kidney and pancreas.

It localises to the cytoplasm. Its subcellular location is the cell membrane. The protein resides in the cytoplasmic vesicle. The protein localises to the phagosome. It is found in the cell cortex. It localises to the cell projection. Its subcellular location is the bleb. Functionally, may play a role in the control of cell motility and survival of macrophages. Plays a role in the regulation of cell morphology and cytoskeletal organization. Required in the cortical actin filament dynamics and cell shape. This Homo sapiens (Human) protein is Formin-like protein 1 (FMNL1).